The chain runs to 361 residues: MKALILVGGFGTRLRPLTLSFPKPLVDFANKPMILHQIEALKEVGVTEVVLAINYRPEVMLNFLKDFEDKLGITITCSQETEPLGTAGPLALARDKLVDGSGEPFFVLNSDVISEYPFAELIKFHKNHGGEATIMVTKVDEPSKYGVVVMEEATGMVEKFVEKPKIFVGNKINAGIYLLNPSVLDRIELKPTSIEKEVFPRISADAKLFAMVLPGFWMDVGQPRDYITGLRLYLDSLRKRSANRLATGAHIVGNVLVHESAKIGEGCLIGPDVAIGPGCVVEDGVRLSRCTVMRGVRIKKHACISNSIIGWHSTVGQWARIENMTILGEDVHVGDEVYTNGGVILPHKEIKSSILKPEIVM.

2 residues coordinate GDP-alpha-D-mannose: leucine 6 and valine 7. Positions 9, 11, 12, 13, and 23 each coordinate diphosphate. Glycine 85, asparagine 109, aspartate 111, glycine 146, and asparagine 173 together coordinate GDP-alpha-D-mannose.

Belongs to the transferase hexapeptide repeat family.

It catalyses the reaction alpha-D-mannose 1-phosphate + GTP + H(+) = GDP-alpha-D-mannose + diphosphate. The protein operates within nucleotide-sugar biosynthesis; GDP-alpha-D-mannose biosynthesis; GDP-alpha-D-mannose from alpha-D-mannose 1-phosphate (GTP route): step 1/1. In terms of biological role, catalyzes a reaction of the Smirnoff-Wheeler pathway, the major route to ascorbate biosynthesis in plants. This chain is Probable mannose-1-phosphate guanylyltransferase 3, found in Oryza sativa subsp. japonica (Rice).